The sequence spans 374 residues: Transcription factor NF-E2 45 kDa subunit (374 aa).

2 disordered regions span residues Met1–Pro21 and Leu40–Pro61. Residues Met1–Tyr83 form a required for interaction with MAPK8 region. The segment at Met1 to Glu207 is transactivation domain. Pro residues predominate over residues Phe48 to Pro61. Short sequence motifs (PXY motif) lie at residues Pro61 to Tyr65 and Pro79 to Tyr83. Positions Leu132–Glu165 are disordered. Residue Ser158 is modified to Phosphoserine; by MAPK8. Position 171 is a phosphoserine; by PKA (Ser171). A disordered region spans residues Glu207–Asp227. Residues Leu267–Leu330 form the bZIP domain. The segment at Arg269–Lys288 is basic motif. The interval Ile292–Leu299 is leucine-zipper. Lys369 is covalently cross-linked (Glycyl lysine isopeptide (Lys-Gly) (interchain with G-Cter in SUMO); alternate). Lys369 is covalently cross-linked (Glycyl lysine isopeptide (Lys-Gly) (interchain with G-Cter in SUMO1); alternate).

The protein belongs to the bZIP family. CNC subfamily. Homodimer; can bind DNA as a homodimer. Erythroid transcription activator nuclear factor erythroid-derived 2 (NF-E2), composed of a heterodimer of NFE2 and MAFK, possesses transactivation activity on beta-globin. Also forms high affinity heterodimer with MAFG; the interaction promotes erythropoiesis. Interacts (via the PXY motif 1) with ITCH (via the WW 1 domain); the interaction promotes 'Lys63'-linked ubiquitination of NFE2, translocates it to the cytoplasm and inhibits its transactivation activity. Interacts with KMT2D/MLL2; the interaction promotes transactivation of the beta-globin locus. Interacts with MAPK8 (phosphorylated form); the interaction leads to phosphorylation of NFE2 in undifferentiated cells. Post-translationally, phosphorylated on serine residues. In undifferentiated erythrocytes, phosphorylated by MAPK8 which then leads to ubiquitination and protein degradation. In terms of processing, sumoylated. Sumoylation is required for translocation to nuclear bodies PODs, anchoring to the gene loci, and transactivation of the beta-globin gene. Ubiquitinated mainly by 'Lys63'-linked ubiquitin. Polyubiquitination with 'Lys63'-linked ubiquitin by ITCH retains NFE2 in the cytoplasm preventing its transactivation activity. In undifferentiated erythrocyte, is ubiquitinated after MAPK8-mediatd phosphorylation leading to protein degradation.

The protein resides in the nucleus. It is found in the cytoplasm. In terms of biological role, component of the NF-E2 complex essential for regulating erythroid and megakaryocytic maturation and differentiation. Binds to the hypersensitive site 2 (HS2) of the beta-globin control region (LCR). This subunit (NFE2) recognizes the TCAT/C sequence of the AP-1-like core palindrome present in a number of erythroid and megakaryocytic gene promoters. Requires MAFK or other small MAF proteins for binding to the NF-E2 motif. May play a role in all aspects of hemoglobin production from globin and heme synthesis to procurement of iron. The protein is Transcription factor NF-E2 45 kDa subunit (NFE2) of Bos taurus (Bovine).